A 758-amino-acid polypeptide reads, in one-letter code: Actin filament-associated protein 1-like 1 (758 aa).

The disordered stretch occupies residues 91–194; sequence YRDSSENLSC…YESYDEEDEE (104 aa). Residues 102 to 120 show a composition bias toward pro residues; sequence LPPPPSAPPPPLPTTPPPE. Polar residues predominate over residues 137-148; the sequence is YITSRNSSSPPN. The segment covering 177 to 186 has biased composition (low complexity); that stretch reads ESDGLSSSYE. Residues 216-312 form the PH 1 domain; the sequence is DSRICAFLLR…WLRVIKEVIS (97 aa). The interval 335-369 is disordered; the sequence is SHDKTSDSDSAANGENSSLSSGKENRDTGKCRKGG. Residues 342 to 356 are compositionally biased toward polar residues; that stretch reads SDSAANGENSSLSSG. The 95-residue stretch at 409-503 folds into the PH 2 domain; the sequence is EVPCCGYLSV…WLGLLLAQTG (95 aa). A coiled-coil region spans residues 602–690; it reads KTRAEEDARK…TEVKENLKKS (89 aa). The interval 692–758 is disordered; that stretch reads AGGPTLGLAV…KAKEWEKKKP (67 aa). The segment covering 749 to 758 has biased composition (basic and acidic residues); it reads KAKEWEKKKP.

The protein resides in the cytoplasm. It localises to the cell projection. The protein localises to the podosome. Its subcellular location is the invadopodium. It is found in the cytoskeleton. The protein resides in the stress fiber. In terms of biological role, may be involved in podosome and invadosome formation. The sequence is that of Actin filament-associated protein 1-like 1 (afap1l1) from Xenopus tropicalis (Western clawed frog).